A 75-amino-acid polypeptide reads, in one-letter code: Cytochrome c oxidase subunit 6C (75 aa).

Over 1 to 13 (MSSGALTKPQMRG) the chain is Mitochondrial matrix. The chain crosses the membrane as a helical span at residues 14–54 (LLAKRLRFHIVGAFAVSLGVAAFYKFAVAEPRKKAYADFYR). The Mitochondrial intermembrane portion of the chain corresponds to 55–75 (NYDSMKDFEEMRKAGIFQSAK).

The protein belongs to the cytochrome c oxidase subunit 6c family. In terms of assembly, component of the cytochrome c oxidase (complex IV, CIV), a multisubunit enzyme composed of 14 subunits. The complex is composed of a catalytic core of 3 subunits MT-CO1, MT-CO2 and MT-CO3, encoded in the mitochondrial DNA, and 11 supernumerary subunits COX4I, COX5A, COX5B, COX6A, COX6B, COX6C, COX7A, COX7B, COX7C, COX8 and NDUFA4, which are encoded in the nuclear genome. The complex exists as a monomer or a dimer and forms supercomplexes (SCs) in the inner mitochondrial membrane with NADH-ubiquinone oxidoreductase (complex I, CI) and ubiquinol-cytochrome c oxidoreductase (cytochrome b-c1 complex, complex III, CIII), resulting in different assemblies (supercomplex SCI(1)III(2)IV(1) and megacomplex MCI(2)III(2)IV(2)).

The protein localises to the mitochondrion inner membrane. Its pathway is energy metabolism; oxidative phosphorylation. In terms of biological role, component of the cytochrome c oxidase, the last enzyme in the mitochondrial electron transport chain which drives oxidative phosphorylation. The respiratory chain contains 3 multisubunit complexes succinate dehydrogenase (complex II, CII), ubiquinol-cytochrome c oxidoreductase (cytochrome b-c1 complex, complex III, CIII) and cytochrome c oxidase (complex IV, CIV), that cooperate to transfer electrons derived from NADH and succinate to molecular oxygen, creating an electrochemical gradient over the inner membrane that drives transmembrane transport and the ATP synthase. Cytochrome c oxidase is the component of the respiratory chain that catalyzes the reduction of oxygen to water. Electrons originating from reduced cytochrome c in the intermembrane space (IMS) are transferred via the dinuclear copper A center (CU(A)) of subunit 2 and heme A of subunit 1 to the active site in subunit 1, a binuclear center (BNC) formed by heme A3 and copper B (CU(B)). The BNC reduces molecular oxygen to 2 water molecules using 4 electrons from cytochrome c in the IMS and 4 protons from the mitochondrial matrix. The protein is Cytochrome c oxidase subunit 6C (COX6C) of Carlito syrichta (Philippine tarsier).